The sequence spans 144 residues: Superoxide dismutase [Mn], mitochondrial (144 aa).

Mn(2+) contacts are provided by His-10, His-58, and Asp-143.

Belongs to the iron/manganese superoxide dismutase family. Homotetramer. Mn(2+) serves as cofactor.

It is found in the mitochondrion matrix. It catalyses the reaction 2 superoxide + 2 H(+) = H2O2 + O2. In terms of biological role, destroys superoxide anion radicals which are normally produced within the cells and which are toxic to biological systems. This chain is Superoxide dismutase [Mn], mitochondrial, found in Branchiostoma floridae (Florida lancelet).